The sequence spans 260 residues: Hydroxyethylthiazole kinase (260 aa).

2 residues coordinate ATP: R126 and S172. Residue G199 participates in substrate binding.

The protein belongs to the Thz kinase family. Mg(2+) serves as cofactor.

It catalyses the reaction 5-(2-hydroxyethyl)-4-methylthiazole + ATP = 4-methyl-5-(2-phosphooxyethyl)-thiazole + ADP + H(+). Its pathway is cofactor biosynthesis; thiamine diphosphate biosynthesis; 4-methyl-5-(2-phosphoethyl)-thiazole from 5-(2-hydroxyethyl)-4-methylthiazole: step 1/1. In terms of biological role, catalyzes the phosphorylation of the hydroxyl group of 4-methyl-5-beta-hydroxyethylthiazole (THZ). The protein is Hydroxyethylthiazole kinase of Burkholderia thailandensis (strain ATCC 700388 / DSM 13276 / CCUG 48851 / CIP 106301 / E264).